Consider the following 751-residue polypeptide: Probable alpha-galactosidase C (751 aa).

An N-terminal signal peptide occupies residues 1–27 (MFGSPKRAALAAASLLAIFGNGPSVMA). N-linked (GlcNAc...) asparagine glycans are attached at residues Asn-49, Asn-57, Asn-162, Asn-186, Asn-194, Asn-366, Asn-433, Asn-452, and Asn-500. The Nucleophile role is filled by Asp-510. The active-site Proton donor is the Asp-572. Asn-720 is a glycosylation site (N-linked (GlcNAc...) asparagine).

The protein belongs to the glycosyl hydrolase 36 family. Homotetramer. The cofactor is Mg(2+). Requires NAD(+) as cofactor.

It is found in the secreted. The catalysed reaction is Hydrolysis of terminal, non-reducing alpha-D-galactose residues in alpha-D-galactosides, including galactose oligosaccharides, galactomannans and galactolipids.. Its function is as follows. Hydrolyzes a variety of simple alpha-D-galactoside as well as more complex molecules such as oligosaccharides and polysaccharides. The protein is Probable alpha-galactosidase C (aglC) of Aspergillus flavus (strain ATCC 200026 / FGSC A1120 / IAM 13836 / NRRL 3357 / JCM 12722 / SRRC 167).